Reading from the N-terminus, the 111-residue chain is UPF0235 protein glr3835 (111 aa).

This sequence belongs to the UPF0235 family.

The protein is UPF0235 protein glr3835 of Gloeobacter violaceus (strain ATCC 29082 / PCC 7421).